A 363-amino-acid chain; its full sequence is Fructose-1,6-bisphosphatase 1 (363 aa).

The residue at position 2 (Val2) is an N-acetylvaline. Residues 18-22 (VLEEG) and 28-32 (TGEMT) each bind AMP. The Mg(2+) site is built by Asp69 and Glu98. 113–114 (KY) lines the AMP pocket. 3 residues coordinate Mg(2+): Asp119, Leu121, and Asp122. 122–125 (DGSS) is a binding site for substrate. Arg141 is an AMP binding site. N6-succinyllysine is present on Lys151. Substrate contacts are provided by residues 213-216 (NEGY), 244-249 (RYVGSM), Tyr265, and 275-277 (KLR). 3 positions are modified to phosphotyrosine: Tyr216, Tyr245, and Tyr265. Mg(2+) is bound at residue Glu281. Phosphoserine is present on residues Ser339 and Ser353.

It belongs to the FBPase class 1 family. As to quaternary structure, homotetramer. Requires Mg(2+) as cofactor.

It carries out the reaction beta-D-fructose 1,6-bisphosphate + H2O = beta-D-fructose 6-phosphate + phosphate. The protein operates within carbohydrate biosynthesis; gluconeogenesis. Its activity is regulated as follows. Subject to complex allosteric regulation. The enzyme can assume an active R-state, or an inactive T-state. Intermediate conformations may exist. AMP acts as an allosteric inhibitor. AMP binding affects the turnover of bound substrate and not the affinity for substrate. Fructose 2,6-bisphosphate acts as a competitive inhibitor. Fructose 2,6-bisphosphate and AMP have synergistic effects. In terms of biological role, catalyzes the hydrolysis of fructose 1,6-bisphosphate to fructose 6-phosphate in the presence of divalent cations, acting as a rate-limiting enzyme in gluconeogenesis. Plays a role in regulating glucose sensing and insulin secretion of pancreatic beta-cells. Appears to modulate glycerol gluconeogenesis in liver. Important regulator of appetite and adiposity; increased expression of the protein in liver after nutrient excess increases circulating satiety hormones and reduces appetite-stimulating neuropeptides and thus seems to provide a feedback mechanism to limit weight gain. The sequence is that of Fructose-1,6-bisphosphatase 1 (Fbp1) from Rattus norvegicus (Rat).